A 179-amino-acid polypeptide reads, in one-letter code: Bifunctional protein PyrR (179 aa).

The PRPP-binding signature appears at 100–112 (VILVDDVLFTGRT).

This sequence belongs to the purine/pyrimidine phosphoribosyltransferase family. PyrR subfamily. As to quaternary structure, homodimer and homohexamer; in equilibrium.

The catalysed reaction is UMP + diphosphate = 5-phospho-alpha-D-ribose 1-diphosphate + uracil. Regulates transcriptional attenuation of the pyrimidine nucleotide (pyr) operon by binding in a uridine-dependent manner to specific sites on pyr mRNA. This disrupts an antiterminator hairpin in the RNA and favors formation of a downstream transcription terminator, leading to a reduced expression of downstream genes. Its function is as follows. Also displays a weak uracil phosphoribosyltransferase activity which is not physiologically significant. The sequence is that of Bifunctional protein PyrR from Geobacillus thermodenitrificans (strain NG80-2).